The chain runs to 204 residues: Ras-related protein Rab-7L1 (204 aa).

Residues Ser-33, Lys-34, His-35, Tyr-36, Lys-37, and Thr-39 each contribute to the GTP site. Residues 36 to 44 (YKSTVGVDF) carry the Effector region motif. At Thr-71 the chain carries Phosphothreonine; by LRRK2. The residue at position 72 (Ser-72) is a Phosphoserine. Lys-126, Val-156, and Lys-157 together coordinate GTP. S-geranylgeranyl cysteine attachment occurs at residues Cys-203 and Cys-204.

It belongs to the small GTPase superfamily. Rab family. In terms of assembly, interacts with LRRK2 (via the N-terminus); this interaction is direct and stimulates kinase activity.

The protein localises to the cell membrane. It localises to the cytoplasm. Its subcellular location is the perinuclear region. The protein resides in the golgi apparatus. It is found in the golgi apparatus membrane. The protein localises to the trans-Golgi network. It localises to the cytoskeleton. In terms of biological role, the small GTPases Rab are key regulators in vesicle trafficking. Essential for maintaining the integrity of endosome-trans-Golgi network structure. Together with LRRK2, plays a role in the retrograde trafficking pathway for recycling proteins, such as mannose 6 phosphate receptor (M6PR), between lysosomes and the Golgi apparatus in a retromer-dependent manner. Recruits LRRK2 to the Golgi apparatus and stimulates LRRK2 kinase activity. Stimulates phosphorylation of RAB10 'Thr-73' by LRRK2. Also regulates neuronal process morphology in the intact central nervous system (CNS). This is Ras-related protein Rab-7L1 (Rab29) from Mus musculus (Mouse).